A 149-amino-acid chain; its full sequence is Large ribosomal subunit protein bL9 (149 aa).

Belongs to the bacterial ribosomal protein bL9 family.

Binds to the 23S rRNA. The protein is Large ribosomal subunit protein bL9 of Shewanella amazonensis (strain ATCC BAA-1098 / SB2B).